The sequence spans 620 residues: Synchronized import protein 1 (620 aa).

The disordered stretch occupies residues 1–32; that stretch reads MGRSKKRSRASSSRLNPLRKAGSNDNNKDTNV. ARM repeat units lie at residues 25 to 64, 66 to 106, 181 to 221, 258 to 299, 340 to 386, 435 to 470, 471 to 510, and 564 to 607; these read DNNK…VLCE, AHMR…NLSL, DDIL…TTLD, ANEL…NIDP, IKLQ…NFLP, DSQD…NRAL, INVQ…TYAM, and RGGF…TLDS.

Belongs to the nuclear import and ribosome assembly adapter family. In terms of assembly, forms a heterotrimeric complex with RPL5 and RPL11A or RPL11B; interaction of this complex with KAP104 allows the nuclear import of the heterotrimer. Component of a hexameric 5S RNP precursor complex, composed of 5S RNA, RRS1, RPF2, RPL5, RPL11A/RPL11B and SYO1; this complex acts as a precursor for ribosome assembly.

It localises to the cytoplasm. The protein resides in the nucleus. Nuclear import adapter that specifically recruits the two functionally and topologically linked ribosomal proteins RPL5 and RPL11 (encoded by RPL11A and RPL11B). Guarantees that this cargo pair remains bound together from the time of synthesis in the cytoplasm until delivery to the nascent 5S rRNA in the nucleus. This chain is Synchronized import protein 1 (SYO1), found in Saccharomyces cerevisiae (strain ATCC 204508 / S288c) (Baker's yeast).